The following is a 435-amino-acid chain: Tumor necrosis factor receptor superfamily member 3 (435 aa).

A signal peptide spans 1–30; the sequence is MLLPWATSAPGLAWGPLVLGLFGLLAASQP. The Extracellular portion of the chain corresponds to 31–227; the sequence is QAVPPYASEN…PPEMSGTMLM (197 aa). Asn40 carries an N-linked (GlcNAc...) asparagine glycan. TNFR-Cys repeat units follow at residues 42 to 81, 82 to 124, 125 to 168, and 169 to 211; these read TCRD…TVCA, TCAE…KTQC, RCQP…NHCV, and PCKA…TTCK. Cystine bridges form between Cys43-Cys58, Cys59-Cys72, Cys62-Cys80, Cys83-Cys98, Cys101-Cys116, Cys104-Cys124, Cys126-Cys132, Cys139-Cys148, Cys142-Cys167, and Cys170-Cys185. A glycan (N-linked (GlcNAc...) asparagine) is linked at Asn177. The chain crosses the membrane as a helical span at residues 228–248; that stretch reads LAVLLPLAFFLLLATVFSCIW. Residues 249–435 are Cytoplasmic-facing; the sequence is KSHPSLCRKL…GPRNQFITHD (187 aa). At Ser323 the chain carries Phosphoserine. The segment covering 373 to 399 has biased composition (pro residues); it reads PGPGDLPATPEPPYPIPEEGDPGPPGL. The interval 373 to 435 is disordered; the sequence is PGPGDLPATP…GPRNQFITHD (63 aa). Residues 403–417 are compositionally biased toward basic and acidic residues; the sequence is HQEDGKAWHLAETEH. A compositionally biased stretch (polar residues) spans 421 to 435; it reads TPSNRGPRNQFITHD.

In terms of assembly, self-associates; dimerization and trimerization are promoted by lymphotoxin (LTA(1)-LTB(2)). Associates with TRAF3. Associates with TRAF4. Associates with TRAF5. Interacts with Aedes aegypti lymphotoxin beta receptor inhibitor; the interaction reduces dimerization and trimerization of LTBR induced by lymphotoxin (LTA(1)-LTB(2)). (Microbial infection) Interacts with HCV core protein.

Its subcellular location is the membrane. In terms of biological role, receptor for the heterotrimeric lymphotoxin containing LTA and LTB, and for TNFS14/LIGHT. Activates NF-kappa-B signaling pathway upon stimulation with lymphotoxin (LTA(1)-LTB(2)). Promotes apoptosis via TRAF3 and TRAF5. May play a role in the development of lymphoid organs. This is Tumor necrosis factor receptor superfamily member 3 (LTBR) from Homo sapiens (Human).